Reading from the N-terminus, the 53-residue chain is Large ribosomal subunit protein bL33A (53 aa).

It belongs to the bacterial ribosomal protein bL33 family.

The polypeptide is Large ribosomal subunit protein bL33A (Mycoplasmoides gallisepticum (strain R(low / passage 15 / clone 2)) (Mycoplasma gallisepticum)).